The following is a 309-amino-acid chain: Olfactory receptor 8U1 (309 aa).

Topologically, residues 1 to 25 (MAHINCTQATEFILVGLTDHQELKM) are extracellular. Residue N5 is glycosylated (N-linked (GlcNAc...) asparagine). The chain crosses the membrane as a helical span at residues 26–46 (PLFVLFLSIYLFTVVGNLGLI). At 47–54 (LLIRADTS) the chain is on the cytoplasmic side. A helical transmembrane segment spans residues 55–75 (LNTPMYFFLSNLAFVDFCYSS). At 76–99 (VITPKMLGNFLYKQNVISFDACAT) the chain is on the extracellular side. C97 and C189 are joined by a disulfide. The helical transmembrane segment at 100-120 (QLGCFLTFMISESLLLASMAY) threads the bilayer. Residues 121-139 (DRYVAICNPLLYMVVMTPG) lie on the Cytoplasmic side of the membrane. Residues 140–160 (ICIQLVAVPYSYSFLMALFHT) form a helical membrane-spanning segment. Residues 161 to 197 (ILTFRLSYCHSNIVNHFYCDDMPLLRLTCSDTRFKQL) lie on the Extracellular side of the membrane. The chain crosses the membrane as a helical span at residues 198-217 (WIFACAGIMFISSLLIVFVS). At 218–237 (YMFIISAILRMHSAEGRQKA) the chain is on the cytoplasmic side. Residues 238-258 (FSTCGSHMLAVTIFYGTLIFM) form a helical membrane-spanning segment. Residues 259–271 (YLQPSSSHALDTD) are Extracellular-facing. The helical transmembrane segment at 272–292 (KMASVFYTVIIPMLNPLIYSL) threads the bilayer. The Cytoplasmic segment spans residues 293–309 (QNKEVKEALKKIIINKN).

The protein belongs to the G-protein coupled receptor 1 family.

It localises to the cell membrane. Functionally, odorant receptor. This chain is Olfactory receptor 8U1 (OR8U1), found in Homo sapiens (Human).